Consider the following 342-residue polypeptide: scyllo-inositol 2-dehydrogenase (NAD(+)) (342 aa).

The protein belongs to the Gfo/Idh/MocA family.

The catalysed reaction is scyllo-inositol + NAD(+) = scyllo-inosose + NADH + H(+). It functions in the pathway polyol metabolism. In terms of biological role, catalyzes the reversible NAD(+)-dependent oxidation of scyllo-inositol (SI) to 2,4,6/3,5-pentahydroxycyclohexanone (scyllo-inosose or SIS). Is required for SI catabolism that allows B.subtilis to utilize SI as the sole carbon source for growth. Cannot use NADP(+) instead of NAD(+). This Bacillus subtilis (strain 168) protein is scyllo-inositol 2-dehydrogenase (NAD(+)).